Here is a 287-residue protein sequence, read N- to C-terminus: Bifunctional protein FolD (287 aa).

NADP(+) contacts are provided by residues Gly169–Ser171 and Ser194.

Belongs to the tetrahydrofolate dehydrogenase/cyclohydrolase family. In terms of assembly, homodimer.

It carries out the reaction (6R)-5,10-methylene-5,6,7,8-tetrahydrofolate + NADP(+) = (6R)-5,10-methenyltetrahydrofolate + NADPH. The enzyme catalyses (6R)-5,10-methenyltetrahydrofolate + H2O = (6R)-10-formyltetrahydrofolate + H(+). The protein operates within one-carbon metabolism; tetrahydrofolate interconversion. Catalyzes the oxidation of 5,10-methylenetetrahydrofolate to 5,10-methenyltetrahydrofolate and then the hydrolysis of 5,10-methenyltetrahydrofolate to 10-formyltetrahydrofolate. The polypeptide is Bifunctional protein FolD (Albidiferax ferrireducens (strain ATCC BAA-621 / DSM 15236 / T118) (Rhodoferax ferrireducens)).